The chain runs to 496 residues: Lysosomal Pro-X carboxypeptidase (496 aa).

Positions 1–21 (MGRRALLLLLLSFLAPWTTIA) are cleaved as a signal peptide. A propeptide spanning residues 22-45 (LRPALRALGSLHLPTNPTSLPAVA) is cleaved from the precursor. 2 N-linked (GlcNAc...) asparagine glycosylation sites follow: Asn-47 and Asn-101. The Charge relay system role is filled by Ser-179. An SKS domain region spans residues 194–334 (HMVVGALAAS…QNIFQALNVY (141 aa)). 4 disulfides stabilise this stretch: Cys-215–Cys-372, Cys-233–Cys-310, Cys-264–Cys-343, and Cys-364–Cys-394. N-linked (GlcNAc...) asparagine glycans are attached at residues Asn-317, Asn-336, and Asn-345. Asn-415 carries N-linked (GlcNAc...) asparagine glycosylation. Active-site charge relay system residues include Asp-430 and His-455.

The protein belongs to the peptidase S28 family. As to quaternary structure, homodimer.

The protein localises to the lysosome. The catalysed reaction is Cleavage of a -Pro-|-Xaa bond to release a C-terminal amino acid.. Cleaves C-terminal amino acids linked to proline in peptides such as angiotensin II, III and des-Arg9-bradykinin. This cleavage occurs at acidic pH, but enzymatic activity is retained with some substrates at neutral pH. The chain is Lysosomal Pro-X carboxypeptidase (PRCP) from Pongo abelii (Sumatran orangutan).